The chain runs to 280 residues: Virginiamycin B lyase (280 aa).

H215 lines the substrate pocket. E254 serves as a coordination point for Mg(2+). The active-site Proton acceptor is H256. Position 271 (E271) interacts with Mg(2+).

It belongs to the Vgb family. In terms of assembly, monomer. It depends on Mg(2+) as a cofactor.

In terms of biological role, inactivates the type B streptogramin antibiotics by linearizing the lactone ring at the ester linkage, generating a free phenylglycine carboxylate and converting the threonyl moiety into 2-amino-butenoic acid. The polypeptide is Virginiamycin B lyase (Mycobacterium sp. (strain JLS)).